A 300-amino-acid polypeptide reads, in one-letter code: 4-hydroxy-tetrahydrodipicolinate synthase (300 aa).

Thr56 is a pyruvate binding site. Tyr145 serves as the catalytic Proton donor/acceptor. Lys173 acts as the Schiff-base intermediate with substrate in catalysis. A pyruvate-binding site is contributed by Val215.

It belongs to the DapA family. Homotetramer; dimer of dimers.

The protein resides in the cytoplasm. It catalyses the reaction L-aspartate 4-semialdehyde + pyruvate = (2S,4S)-4-hydroxy-2,3,4,5-tetrahydrodipicolinate + H2O + H(+). Its pathway is amino-acid biosynthesis; L-lysine biosynthesis via DAP pathway; (S)-tetrahydrodipicolinate from L-aspartate: step 3/4. Functionally, catalyzes the condensation of (S)-aspartate-beta-semialdehyde [(S)-ASA] and pyruvate to 4-hydroxy-tetrahydrodipicolinate (HTPA). The sequence is that of 4-hydroxy-tetrahydrodipicolinate synthase from Prochlorococcus marinus (strain MIT 9301).